The following is a 206-amino-acid chain: Lipid A acyltransferase PagP (206 aa).

The signal sequence occupies residues 1–22; that stretch reads MKQMVCWLTAGLLTLGGLPARA. Positions 26–46 are enriched in low complexity; it reads VPAVPETPAAPAAPAVQETPA. The tract at residues 26–50 is disordered; the sequence is VPAVPETPAAPAAPAVQETPASSAA. Active-site residues include His80, Asp123, and Ser124.

Belongs to the lipid A palmitoyltransferase family. In terms of assembly, homodimer.

The protein localises to the cell outer membrane. It catalyses the reaction a lipid A + a 1,2-diacyl-sn-glycero-3-phosphocholine = a hepta-acyl lipid A + a 2-acyl-sn-glycero-3-phosphocholine. The enzyme catalyses a lipid IVA + a 1,2-diacyl-sn-glycero-3-phosphocholine = a lipid IVB + a 2-acyl-sn-glycero-3-phosphocholine. It carries out the reaction a lipid IIA + a 1,2-diacyl-sn-glycero-3-phosphocholine = a lipid IIB + a 2-acyl-sn-glycero-3-phosphocholine. Functionally, transfers a fatty acid residue from the sn-1 position of a phospholipid to the N-linked hydroxyfatty acid chain on the proximal unit of lipid A or its precursors. The polypeptide is Lipid A acyltransferase PagP (Laribacter hongkongensis (strain HLHK9)).